Reading from the N-terminus, the 634-residue chain is DNA-directed RNA polymerase subunit gamma (634 aa).

Cysteine 74, cysteine 76, cysteine 89, and cysteine 92 together coordinate Zn(2+). Residues aspartate 471, aspartate 473, and aspartate 475 each contribute to the Mg(2+) site.

It belongs to the RNA polymerase beta' chain family. RpoC1 subfamily. In cyanobacteria the RNAP catalytic core is composed of 2 alpha, 1 beta, 1 beta', 1 gamma and 1 omega subunit. When a sigma factor is associated with the core the holoenzyme is formed, which can initiate transcription. It depends on Mg(2+) as a cofactor. The cofactor is Zn(2+).

It catalyses the reaction RNA(n) + a ribonucleoside 5'-triphosphate = RNA(n+1) + diphosphate. DNA-dependent RNA polymerase catalyzes the transcription of DNA into RNA using the four ribonucleoside triphosphates as substrates. The protein is DNA-directed RNA polymerase subunit gamma of Prochlorococcus marinus (strain SARG / CCMP1375 / SS120).